The following is a 276-amino-acid chain: Ubiquinone biosynthesis protein coq11, mitochondrial (276 aa).

The protein belongs to the NAD(P)-dependent epimerase/dehydratase family.

The protein resides in the mitochondrion. In terms of biological role, acts in the coenzyme Q biosynthetic pathway. The chain is Ubiquinone biosynthesis protein coq11, mitochondrial from Schizosaccharomyces pombe (strain 972 / ATCC 24843) (Fission yeast).